Here is a 400-residue protein sequence, read N- to C-terminus: Argininosuccinate synthase (400 aa).

Residues 10–18 (AYSGGVDTS) and alanine 38 each bind ATP. Tyrosine 89 contacts L-citrulline. Glycine 119 contacts ATP. Residues threonine 121, asparagine 125, and aspartate 126 each coordinate L-aspartate. Asparagine 125 is an L-citrulline binding site. Residues arginine 129, serine 177, serine 186, glutamate 262, and tyrosine 274 each contribute to the L-citrulline site.

The protein belongs to the argininosuccinate synthase family. Type 1 subfamily. As to quaternary structure, homotetramer.

The protein resides in the cytoplasm. It carries out the reaction L-citrulline + L-aspartate + ATP = 2-(N(omega)-L-arginino)succinate + AMP + diphosphate + H(+). Its pathway is amino-acid biosynthesis; L-arginine biosynthesis; L-arginine from L-ornithine and carbamoyl phosphate: step 2/3. This chain is Argininosuccinate synthase, found in Prochlorococcus marinus (strain NATL1A).